The sequence spans 367 residues: Chorismate synthase (367 aa).

Arg-48 provides a ligand contact to NADP(+). FMN contacts are provided by residues 125–127, 243–244, Gly-283, 298–302, and Arg-324; these read RSS, NA, and KPTSS.

Belongs to the chorismate synthase family. As to quaternary structure, homotetramer. FMNH2 is required as a cofactor.

It carries out the reaction 5-O-(1-carboxyvinyl)-3-phosphoshikimate = chorismate + phosphate. It participates in metabolic intermediate biosynthesis; chorismate biosynthesis; chorismate from D-erythrose 4-phosphate and phosphoenolpyruvate: step 7/7. Functionally, catalyzes the anti-1,4-elimination of the C-3 phosphate and the C-6 proR hydrogen from 5-enolpyruvylshikimate-3-phosphate (EPSP) to yield chorismate, which is the branch point compound that serves as the starting substrate for the three terminal pathways of aromatic amino acid biosynthesis. This reaction introduces a second double bond into the aromatic ring system. This Psychrobacter arcticus (strain DSM 17307 / VKM B-2377 / 273-4) protein is Chorismate synthase.